The sequence spans 107 residues: UPF0060 membrane protein Sala_0701 (107 aa).

A run of 4 helical transmembrane segments spans residues 4–24, 30–50, 60–80, and 87–107; these read FAYI…WAWL, VWWV…LTLV, AAYG…VEGA, and LIGA…PRGG.

This sequence belongs to the UPF0060 family.

The protein localises to the cell inner membrane. This Sphingopyxis alaskensis (strain DSM 13593 / LMG 18877 / RB2256) (Sphingomonas alaskensis) protein is UPF0060 membrane protein Sala_0701.